The sequence spans 349 residues: Cytoplasmic tRNA 2-thiolation protein 2 (349 aa).

This sequence belongs to the CTU2/NCS2 family.

The protein resides in the cytoplasm. It participates in tRNA modification; 5-methoxycarbonylmethyl-2-thiouridine-tRNA biosynthesis. Plays a central role in 2-thiolation of mcm(5)S(2)U at tRNA wobble positions of tRNA(Lys), tRNA(Glu) and tRNA(Gln). May act by forming a heterodimer with tut-1/ctu-1 that ligates sulfur from thiocarboxylated urm-1 onto the uridine of tRNAs at wobble position. This chain is Cytoplasmic tRNA 2-thiolation protein 2, found in Caenorhabditis elegans.